A 258-amino-acid polypeptide reads, in one-letter code: Imidazole glycerol phosphate synthase subunit HisF (258 aa).

Catalysis depends on residues Asp-11 and Asp-130.

Belongs to the HisA/HisF family. Heterodimer of HisH and HisF.

Its subcellular location is the cytoplasm. The enzyme catalyses 5-[(5-phospho-1-deoxy-D-ribulos-1-ylimino)methylamino]-1-(5-phospho-beta-D-ribosyl)imidazole-4-carboxamide + L-glutamine = D-erythro-1-(imidazol-4-yl)glycerol 3-phosphate + 5-amino-1-(5-phospho-beta-D-ribosyl)imidazole-4-carboxamide + L-glutamate + H(+). It participates in amino-acid biosynthesis; L-histidine biosynthesis; L-histidine from 5-phospho-alpha-D-ribose 1-diphosphate: step 5/9. IGPS catalyzes the conversion of PRFAR and glutamine to IGP, AICAR and glutamate. The HisF subunit catalyzes the cyclization activity that produces IGP and AICAR from PRFAR using the ammonia provided by the HisH subunit. This chain is Imidazole glycerol phosphate synthase subunit HisF, found in Salmonella arizonae (strain ATCC BAA-731 / CDC346-86 / RSK2980).